We begin with the raw amino-acid sequence, 452 residues long: Asparagine--tRNA ligase (452 aa).

The protein belongs to the class-II aminoacyl-tRNA synthetase family. In terms of assembly, homodimer.

It localises to the cytoplasm. It carries out the reaction tRNA(Asn) + L-asparagine + ATP = L-asparaginyl-tRNA(Asn) + AMP + diphosphate + H(+). In Mycoplasma mycoides subsp. mycoides SC (strain CCUG 32753 / NCTC 10114 / PG1), this protein is Asparagine--tRNA ligase.